We begin with the raw amino-acid sequence, 74 residues long: ATP synthase subunit 9, mitochondrial (74 aa).

The next 2 helical transmembrane spans lie at 8–28 and 50–70; these read MGAGAATIALAGAAIGIGNVF and ILGFALTEAIALFALMMAFLI.

Belongs to the ATPase C chain family. F-type ATPases have 2 components, CF(1) - the catalytic core - and CF(0) - the membrane proton channel. CF(1) has five subunits: alpha(3), beta(3), gamma(1), delta(1), epsilon(1). CF(0) has three main subunits: a, b and c.

Its subcellular location is the mitochondrion membrane. Functionally, this protein is one of the chains of the nonenzymatic membrane component (F0) of mitochondrial ATPase. The chain is ATP synthase subunit 9, mitochondrial (ATP9) from Solanum tuberosum (Potato).